The sequence spans 974 residues: UvrABC system protein A (974 aa).

34–41 (GLSGSGKS) serves as a coordination point for ATP. ABC transporter domains lie at 331 to 610 (WARS…TNSL) and 630 to 959 (ISKT…QFLK). 663–670 (GVSGGGKS) provides a ligand contact to ATP. A C4-type zinc finger spans residues 762–788 (CEACQGDGVIKIEMHFLPDVYVTCDVC).

It belongs to the ABC transporter superfamily. UvrA family. As to quaternary structure, forms a heterotetramer with UvrB during the search for lesions.

It is found in the cytoplasm. Functionally, the UvrABC repair system catalyzes the recognition and processing of DNA lesions. UvrA is an ATPase and a DNA-binding protein. A damage recognition complex composed of 2 UvrA and 2 UvrB subunits scans DNA for abnormalities. When the presence of a lesion has been verified by UvrB, the UvrA molecules dissociate. This is UvrABC system protein A from Brucella suis biovar 1 (strain 1330).